We begin with the raw amino-acid sequence, 200 residues long: Oligoribonuclease (200 aa).

Residues 5–169 (MVWIDCEMTG…ADIRESIAEL (165 aa)) form the Exonuclease domain. Tyr126 is an active-site residue.

Belongs to the oligoribonuclease family.

Its subcellular location is the cytoplasm. Its function is as follows. 3'-to-5' exoribonuclease specific for small oligoribonucleotides. This is Oligoribonuclease from Streptomyces coelicolor (strain ATCC BAA-471 / A3(2) / M145).